The chain runs to 455 residues: Golgi pH regulator (455 aa).

A run of 2 helical transmembrane segments spans residues Ala-5–Phe-25 and Val-46–Leu-66. N-linked (GlcNAc...) asparagine glycosylation is present at Asn-67. The next 3 membrane-spanning stretches (helical) occupy residues Leu-79–Val-99, Leu-111–Phe-131, and Val-150–Pro-170. N-linked (GlcNAc...) asparagine glycosylation is present at Asn-180. Helical transmembrane passes span Gly-290 to Phe-310, Ile-343 to Leu-363, Val-378 to Ile-398, and Trp-425 to His-445.

This sequence belongs to the Golgi pH regulator (TC 1.A.38) family. In terms of assembly, homotrimer.

The protein localises to the golgi apparatus membrane. The enzyme catalyses iodide(out) = iodide(in). It carries out the reaction chloride(in) = chloride(out). It catalyses the reaction bromide(in) = bromide(out). The catalysed reaction is fluoride(in) = fluoride(out). Voltage-gated channel that enables the transfer of anions such as iodide, chloride, bromide and fluoride which may function in counter-ion conductance and participates in Golgi acidification. This chain is Golgi pH regulator (gpr89-b), found in Xenopus laevis (African clawed frog).